We begin with the raw amino-acid sequence, 265 residues long: MAFNNSTIIIIIVIAFAFFLIYSQNNQPKIIQQPVPQISQFKSQLNQPQNSQHNGHLNPSIISPQLCPKCDKENCSLEQISPSRSKSPTPQITNVHIEHESDPYSDPIKKQDIYGMMDPLTFPQQRLPREVLQKYQEYYDKNGSYPPFGQNTQPLFDNPVLAGILIKQVDENEPFTDNVPSSIPLFKVKSNKNSNRFFYYIIDQRYFSKLELKIPLDSIRVNGVRYNNAEFYGIPELFDGDVIDNIALYPSNRFSVKLYKIYSFP.

Residues 1-21 (MAFNNSTIIIIIVIAFAFFLI) traverse the membrane as a helical segment. N-linked (GlcNAc...) asparagine; by host glycosylation is found at N74 and N142.

Its subcellular location is the host membrane. It is found in the virion. This is an uncharacterized protein from Acanthamoeba polyphaga mimivirus (APMV).